The following is a 526-amino-acid chain: Cytochrome P450 monooxygenase BOT4 (526 aa).

N-linked (GlcNAc...) asparagine glycosylation is present at N5. A helical membrane pass occupies residues 41-61 (CLVAIILCRFIAVWSYNLWFH). N-linked (GlcNAc...) asparagine glycans are attached at residues N205 and N281. A heme-binding site is contributed by C464.

The protein belongs to the cytochrome P450 family. Requires heme as cofactor.

It localises to the membrane. Its pathway is secondary metabolite biosynthesis. Functionally, cytochrome P450 monooxygenase; part of the gene cluster that mediates the biosynthesis of botrydial. Botrydial is necessary for colonization of plant tissue by the T4 strain. It is a strain-dependent virulence factor since highly aggressive strains like SAS56 or B05 still retain substantial virulence when botrydial synthesis is impaired, since they produce also botcinic acid. The first step of botrydial biosynthesis is performed by the sesquiterpene synthase BOT2 which catalyzes the cyclization of farnesyl diphosphate (FPP) to presilphiperfolan-8-beta-ol (PSP). The cytochrome P450 monooxygenase BOT4 then catalyzes the hydroxylation at C-4 to give a probotryane intermediate. Acetylation of the hydroxyl at C-4 is carried out by the acetyltransferase BOT5, followed by the combined action of the P450 monooxygenases BOT3 and BOT1, to yield finally the glycol, via the regio- and stereospecific hydroxylations at C-10 and C-15 of the probotryane intermediates, respectively. The cleavage of the C10-C15 bond of probotryane skeleton is an intriguing and chemically important reaction, which could be mediated by some of the monooxygenases or by a combination of them. It is possible that either BOT3 or BOT1 would oxidize either the 10- or the 15-hydroxy group to the hydroperoxide derivative, which would then undergo heterolytic fragmentation to give the dialdehyde botrydial. Finally, the dehydrogenase BOT7 might be involved in the conversion of botrydial to dihydrobotrydial. This Botryotinia fuckeliana (Noble rot fungus) protein is Cytochrome P450 monooxygenase BOT4.